The following is a 267-amino-acid chain: Cilia- and flagella-associated protein 300 (267 aa).

Belongs to the CFAP300 family.

Its subcellular location is the cytoplasm. It localises to the cytoskeleton. The protein resides in the cilium axoneme. Its function is as follows. Cilium- and flagellum-specific protein that plays a role in axonemal structure organization and motility. May play a role in outer and inner dynein arm assembly. The sequence is that of Cilia- and flagella-associated protein 300 from Xenopus tropicalis (Western clawed frog).